The chain runs to 328 residues: P2Y purinoceptor 6 (328 aa).

Topologically, residues 1 to 27 (MEWDNGTGQALGLPPTTCVYRENFKQL) are extracellular. N-linked (GlcNAc...) asparagine glycosylation occurs at Asn-5. Residues 28–48 (LLPPVYSAVLAAGLPLNICVI) traverse the membrane as a helical segment. At 49–62 (TQICTSRRALTRTA) the chain is on the cytoplasmic side. The chain crosses the membrane as a helical span at residues 63–83 (VYTLNLALADLLYACSLPLLI). Topologically, residues 84-101 (YNYAQGDHWPFGDFACRL) are extracellular. Residues Cys-99 and Cys-177 are joined by a disulfide bond. Residues 102-122 (VRFLFYANLHGSILFLTCISF) form a helical membrane-spanning segment. Residues 123–144 (QRYLGICHPLAPWHKRGGRRAA) are Cytoplasmic-facing. Residues 145–165 (WLVCVAVWLAVTTQCLPTAIF) form a helical membrane-spanning segment. The Extracellular portion of the chain corresponds to 166-194 (AATGIQRNRTVCYDLSPPALATHYMPYGM). The chain crosses the membrane as a helical span at residues 195 to 215 (ALTVIGFLLPFAALLACYCLL). Residues 216-236 (ACRLCRQDGPAEPVAQERRGK) are Cytoplasmic-facing. The chain crosses the membrane as a helical span at residues 237–257 (AARMAVVVAAAFAISFLPFHI). The Extracellular portion of the chain corresponds to 258–280 (TKTAYLAVRSTPGVPCTVLEAFA). A helical membrane pass occupies residues 281 to 303 (AAYKGTRPFASANSVLDPILFYF). Over 304–328 (TQKKFRRRPHELLQKLTAKWQRQGR) the chain is Cytoplasmic.

Belongs to the G-protein coupled receptor 1 family.

It is found in the cell membrane. In terms of biological role, receptor for extracellular UDP &gt; UTP &gt; ATP. The activity of this receptor is mediated by G proteins which activate a phosphatidylinositol-calcium second messenger system. The chain is P2Y purinoceptor 6 (P2RY6) from Homo sapiens (Human).